The primary structure comprises 341 residues: L-threonine 3-dehydrogenase (341 aa).

Residue Cys-38 coordinates Zn(2+). Catalysis depends on charge relay system residues Thr-40 and His-43. Zn(2+) is bound by residues His-63, Glu-64, Cys-93, Cys-96, Cys-99, and Cys-107. NAD(+) is bound by residues Ile-175, Asp-195, Arg-200, 262–264 (LGI), and 286–287 (IY).

This sequence belongs to the zinc-containing alcohol dehydrogenase family. As to quaternary structure, homotetramer. It depends on Zn(2+) as a cofactor.

Its subcellular location is the cytoplasm. It carries out the reaction L-threonine + NAD(+) = (2S)-2-amino-3-oxobutanoate + NADH + H(+). It participates in amino-acid degradation; L-threonine degradation via oxydo-reductase pathway; glycine from L-threonine: step 1/2. In terms of biological role, catalyzes the NAD(+)-dependent oxidation of L-threonine to 2-amino-3-ketobutyrate. The polypeptide is L-threonine 3-dehydrogenase (Klebsiella pneumoniae (strain 342)).